An 817-amino-acid polypeptide reads, in one-letter code: Disks large homolog 3 (817 aa).

N-acetylmethionine occurs at positions 1 and 2. The disordered stretch occupies residues 33 to 101 (WQVPDPYGPG…GKSTPKLNGS (69 aa)). Gly residues predominate over residues 40–53 (GPGGGNGASAGYGG). Residues 57–69 (QTLPSQAGATPTP) show a composition bias toward polar residues. 3 consecutive PDZ domains span residues 130 to 217 (EEIV…VRRR), 226 to 311 (EVNL…KVAK), and 379 to 465 (DFTR…VAQY). Position 139 is a phosphoserine (Ser139). The SH3 domain occupies 501 to 571 (KRSLYVRALF…PSKKRVEKKE (71 aa)). The Guanylate kinase-like domain maps to 627–802 (ARPVIILGPM…IYNKIKQIIE (176 aa)). Tyr673 is subject to Phosphotyrosine.

The protein belongs to the MAGUK family. In terms of assembly, interacts through its PDZ domains with NETO1, GRIN2B and SYNGAP1. Interacts through its guanylate kinase-like domain with DLGAP1, DLGAP2, DLGAP3 and DLGAP4. Interacts with FLTP/C1orf192. Interacts through its PDZ domains with APC. Interacts through its first two PDZ domains with ERBB4. Interacts through its third PDZ domain with NLGN1, and probably with NLGN2 and NLGN3. Interacts with FRMPD4 (via C-terminus). Interacts with LRFN1, LRFN2 and LRFN4. Interacts with DGKI (via PDZ-binding motif).

Functionally, required for learning most likely through its role in synaptic plasticity following NMDA receptor signaling. The protein is Disks large homolog 3 (DLG3) of Homo sapiens (Human).